The primary structure comprises 337 residues: Ornithine carbamoyltransferase (337 aa).

Residues 57–60 (STRT), Gln-84, Arg-108, and 135–138 (HPTQ) each bind carbamoyl phosphate. L-ornithine is bound by residues Asn-167, Asp-231, and 235–236 (SM). Residues 272–273 (CL) and Arg-317 each bind carbamoyl phosphate.

It belongs to the aspartate/ornithine carbamoyltransferase superfamily. OTCase family.

The protein localises to the cytoplasm. The enzyme catalyses carbamoyl phosphate + L-ornithine = L-citrulline + phosphate + H(+). It functions in the pathway amino-acid degradation; L-arginine degradation via ADI pathway; carbamoyl phosphate from L-arginine: step 2/2. Functionally, reversibly catalyzes the transfer of the carbamoyl group from carbamoyl phosphate (CP) to the N(epsilon) atom of ornithine (ORN) to produce L-citrulline. The polypeptide is Ornithine carbamoyltransferase (Streptococcus equi subsp. zooepidemicus (strain MGCS10565)).